A 230-amino-acid chain; its full sequence is Small ribosomal subunit protein uS3 (230 aa).

In terms of domain architecture, KH type-2 spans 39-107 (VRKYLADKLQ…PAQINIAEIR (69 aa)).

Belongs to the universal ribosomal protein uS3 family. As to quaternary structure, part of the 30S ribosomal subunit. Forms a tight complex with proteins S10 and S14.

Binds the lower part of the 30S subunit head. Binds mRNA in the 70S ribosome, positioning it for translation. This Shewanella oneidensis (strain ATCC 700550 / JCM 31522 / CIP 106686 / LMG 19005 / NCIMB 14063 / MR-1) protein is Small ribosomal subunit protein uS3.